The following is a 48-amino-acid chain: MRVVTFKAEEELLALLDRYAMNKGLYRSEVIREAIIEFLSVRGYKVNG.

This is an uncharacterized protein from Acidianus hospitalis (AFV-1).